We begin with the raw amino-acid sequence, 996 residues long: Poly [ADP-ribose] polymerase (996 aa).

The DNA-binding element occupies 1 to 369 (MEIDLPFKVE…TSTILKNISL (369 aa)). 2 consecutive PARP-type zinc fingers follow at residues 7–89 (FKVE…DNCT) and 114–203 (FGIE…PVIK). Residues C19, C22, H51, C54, C126, C129, H161, and C164 each coordinate Zn(2+). 2 consecutive short sequence motifs (nuclear localization signal) follow at residues 211 to 214 (KKAK) and 232 to 235 (KIKK). The PADR1 zinc-binding domain maps to 220 to 358 (EEDAASIKEL…EVRAIRYIPP (139 aa)). The zinc ribbon stretch occupies residues 286 to 329 (GALLPCTDCKGRQLLFHKSGYLCNGDLTEWTKCTKLLKEPERKS). 4 residues coordinate Zn(2+): C291, C294, C308, and C318. The interval 370-507 (KKGDELDGPK…SIYTKSVPKS (138 aa)) is automodification domain. Residues 382–473 (RERPPLYNIE…AGAINYISSM (92 aa)) enclose the BRCT domain. A WGR domain is found at 527–625 (VAHVYVSRNK…ENFVKVAGRM (99 aa)). The PARP alpha-helical domain occupies 647–764 (KSKLPLSVQD…EIECAYSLLQ (118 aa)). The 224-residue stretch at 773-996 (NPIDKHYEQL…YMLRMNFKYK (224 aa)) folds into the PARP catalytic domain.

Belongs to the ARTD/PARP family.

Its subcellular location is the nucleus. It carries out the reaction NAD(+) + (ADP-D-ribosyl)n-acceptor = nicotinamide + (ADP-D-ribosyl)n+1-acceptor + H(+).. The enzyme catalyses L-aspartyl-[protein] + NAD(+) = 4-O-(ADP-D-ribosyl)-L-aspartyl-[protein] + nicotinamide. The catalysed reaction is L-glutamyl-[protein] + NAD(+) = 5-O-(ADP-D-ribosyl)-L-glutamyl-[protein] + nicotinamide. Poly-ADP-ribosyltransferase that mediates poly-ADP-ribosylation of proteins and plays a key role in DNA repair. Mainly mediates glutamate and aspartate ADP-ribosylation of target proteins: the ADP-D-ribosyl group of NAD(+) is transferred to the acceptor carboxyl group of glutamate and aspartate residues and further ADP-ribosyl groups are transferred to the 2'-position of the terminal adenosine moiety, building up a polymer with an average chain length of 20-30 units. This chain is Poly [ADP-ribose] polymerase, found in Sarcophaga peregrina (Flesh fly).